Here is a 96-residue protein sequence, read N- to C-terminus: Putative pterin-4-alpha-carbinolamine dehydratase (96 aa).

The protein belongs to the pterin-4-alpha-carbinolamine dehydratase family.

The catalysed reaction is (4aS,6R)-4a-hydroxy-L-erythro-5,6,7,8-tetrahydrobiopterin = (6R)-L-erythro-6,7-dihydrobiopterin + H2O. The sequence is that of Putative pterin-4-alpha-carbinolamine dehydratase from Prochlorococcus marinus (strain MIT 9215).